Reading from the N-terminus, the 953-residue chain is UvrABC system protein A (953 aa).

Residue 33–40 (GLSGSGKS) participates in ATP binding. ABC transporter domains follow at residues 320–599 (WGST…EESI) and 619–949 (GHDN…RYLK). 652 to 659 (GVSGSGKS) is a binding site for ATP. A C4-type zinc finger spans residues 752-778 (CEACQGDGLIKIEMHFLPDVYVKCDIC).

This sequence belongs to the ABC transporter superfamily. UvrA family. Forms a heterotetramer with UvrB during the search for lesions.

It is found in the cytoplasm. The UvrABC repair system catalyzes the recognition and processing of DNA lesions. UvrA is an ATPase and a DNA-binding protein. A damage recognition complex composed of 2 UvrA and 2 UvrB subunits scans DNA for abnormalities. When the presence of a lesion has been verified by UvrB, the UvrA molecules dissociate. The protein is UvrABC system protein A of Rickettsia typhi (strain ATCC VR-144 / Wilmington).